The primary structure comprises 719 residues: Protein STRUBBELIG-RECEPTOR FAMILY 6 (719 aa).

The N-terminal stretch at 1-29 is a signal peptide; that stretch reads MRENWAVVALFTLCIVGFELRFIHGATDA. At 30–293 the chain is on the extracellular side; the sequence is SDTSALNTLF…SKKSGIGAGA (264 aa). LRR repeat units lie at residues 97 to 118, 119 to 140, 143 to 164, 167 to 190, 191 to 213, and 214 to 234; these read SLTELDLSSNNLGGDLPYQFPP, NLQRLNLANNQFTGAASYSLSQ, PLKYLNLGHNQFKGQIAIDFSK, SLTTLDFSFNSFTNSLPATFSSLT, SLKSLYLQNNQFSGTVDVLAGLP, and LETLNIANNDFTGWIPSSLKG. Positions 242 to 287 are disordered; it reads NSFNTGPAPPPPPGTPPIRGSPSRKSGGRESRSSDESTRNGDSKKS. Over residues 248–257 the composition is skewed to pro residues; sequence PAPPPPPGTP. Basic and acidic residues predominate over residues 268–286; the sequence is GGRESRSSDESTRNGDSKK. A helical transmembrane segment spans residues 294-314; it reads IAGIIISLLVVTALLVAFFLF. Residues 315–719 lie on the Cytoplasmic side of the membrane; the sequence is RRKKSKRSSP…GSADTTSDYM (405 aa). 2 disordered regions span residues 322–355 and 364–383; these read SSPMDIEKTDNQPFTLASNDFHENNSIQSSSSVE and SINLRPPPIDRNKSFDDEDS. Over residues 332–354 the composition is skewed to polar residues; it reads NQPFTLASNDFHENNSIQSSSSV. A Phosphoserine modification is found at serine 377. Residues 416-690 enclose the Protein kinase domain; it reads FSVDNLLGEG…SEVVQALVVL (275 aa). Residues 422-430 and lysine 444 each bind ATP; that span reads LGEGTFGRV. Positions 700–719 are disordered; that stretch reads TVGVDPSQRAGSADTTSDYM. The segment covering 708–719 has biased composition (polar residues); the sequence is RAGSADTTSDYM.

It belongs to the protein kinase superfamily. Ser/Thr protein kinase family. Expressed in seedlings, roots, stems, leaves, flowers and siliques.

It is found in the membrane. This is Protein STRUBBELIG-RECEPTOR FAMILY 6 (SRF6) from Arabidopsis thaliana (Mouse-ear cress).